A 493-amino-acid chain; its full sequence is Probable cytosol aminopeptidase (493 aa).

2 residues coordinate Mn(2+): Lys262 and Asp267. The active site involves Lys274. Mn(2+)-binding residues include Asp286, Asp345, and Glu347. The active site involves Arg349.

The protein belongs to the peptidase M17 family. It depends on Mn(2+) as a cofactor.

Its subcellular location is the cytoplasm. The enzyme catalyses Release of an N-terminal amino acid, Xaa-|-Yaa-, in which Xaa is preferably Leu, but may be other amino acids including Pro although not Arg or Lys, and Yaa may be Pro. Amino acid amides and methyl esters are also readily hydrolyzed, but rates on arylamides are exceedingly low.. It catalyses the reaction Release of an N-terminal amino acid, preferentially leucine, but not glutamic or aspartic acids.. In terms of biological role, presumably involved in the processing and regular turnover of intracellular proteins. Catalyzes the removal of unsubstituted N-terminal amino acids from various peptides. This Cyanothece sp. (strain PCC 7425 / ATCC 29141) protein is Probable cytosol aminopeptidase.